The chain runs to 398 residues: Tryptophan synthase beta chain (398 aa).

K88 bears the N6-(pyridoxal phosphate)lysine mark.

The protein belongs to the TrpB family. In terms of assembly, tetramer of two alpha and two beta chains. Pyridoxal 5'-phosphate is required as a cofactor.

It carries out the reaction (1S,2R)-1-C-(indol-3-yl)glycerol 3-phosphate + L-serine = D-glyceraldehyde 3-phosphate + L-tryptophan + H2O. It participates in amino-acid biosynthesis; L-tryptophan biosynthesis; L-tryptophan from chorismate: step 5/5. The beta subunit is responsible for the synthesis of L-tryptophan from indole and L-serine. The sequence is that of Tryptophan synthase beta chain from Actinobacillus succinogenes (strain ATCC 55618 / DSM 22257 / CCUG 43843 / 130Z).